Reading from the N-terminus, the 117-residue chain is Membrane-anchored ubiquitin-fold protein 1 (117 aa).

In terms of domain architecture, Ubiquitin-like spans 8 to 74 (LEIKFRLTDG…LENSKTVKDY (67 aa)). The S-palmitoyl cysteine moiety is linked to residue cysteine 112. Cysteine methyl ester is present on cysteine 114. Cysteine 114 carries S-farnesyl cysteine lipidation. The propeptide at 115-117 (SVM) is removed in mature form.

It localises to the cell membrane. Its function is as follows. May serve as docking site to facilitate the association of other proteins to the plasma membrane. In Arabidopsis thaliana (Mouse-ear cress), this protein is Membrane-anchored ubiquitin-fold protein 1 (MUB1).